The chain runs to 169 residues: ALK and LTK ligand 2a (169 aa).

Residues 1–25 form the signal peptide; sequence MRALRAPVLVMGLVLLICTAAQSDA. Positions 45 to 68 are disordered; sequence ENSADDESAQKTESAPEPKDTHHL. Residues 52-67 show a composition bias toward basic and acidic residues; sequence SAQKTESAPEPKDTHH. Disulfide bonds link C130–C166 and C144–C153.

Belongs to the ALKAL family. Homodimer. Expressed at high level in the notochord and iridophore stripes of the trunk, as well as in the eye and swim bladder.

It localises to the secreted. The protein localises to the cell membrane. Cytokine that acts as a physiological ligand for receptor tyrosine kinases LTK and ALK. Required for neural crest cell differentiation and iridophore development during embryonic iridophore development and adult stripe development by acting as a receptor for LTK. This Danio rerio (Zebrafish) protein is ALK and LTK ligand 2a.